Reading from the N-terminus, the 103-residue chain is Putative double-stranded DNA mimic protein HD_0986 (103 aa).

The protein belongs to the putative dsDNA mimic protein family.

In terms of biological role, may act as a double-stranded DNA (dsDNA) mimic. Probably regulates the activity of a dsDNA-binding protein. The chain is Putative double-stranded DNA mimic protein HD_0986 from Haemophilus ducreyi (strain 35000HP / ATCC 700724).